The following is a 74-amino-acid chain: Kappa-stichotoxin-Shd5a (74 aa).

Residues 1–22 (MKFQVIAAVLLIAFCLCVVVTA) form the signal peptide. Residues 23–39 (RMELQDVEDVENGFQKR) constitute a propeptide that is removed on maturation. The ShKT domain occupies 42–74 (CIDTIPQSRCTAFQCKHSMKYRLSFCRKTCGTC). 3 cysteine pairs are disulfide-bonded: C42–C74, C51–C67, and C56–C71.

The protein belongs to the sea anemone type 1 potassium channel toxin family. Type 1a subfamily.

It localises to the secreted. The protein resides in the nematocyst. Inhibits voltage-gated potassium channels (Kv) with higher potency for Kv1.1/KCNA1 and Kv1.3/KCNA3. This is Kappa-stichotoxin-Shd5a from Stichodactyla haddoni (Saddle carpet anemone).